Here is a 113-residue protein sequence, read N- to C-terminus: Flagellar hook-basal body complex protein FliE (113 aa).

Belongs to the FliE family.

The protein localises to the bacterial flagellum basal body. This Rhizobium etli (strain ATCC 51251 / DSM 11541 / JCM 21823 / NBRC 15573 / CFN 42) protein is Flagellar hook-basal body complex protein FliE.